A 215-amino-acid chain; its full sequence is Ribonuclease T (215 aa).

The region spanning 20–194 (VVIDVETAGF…YDTEQTAQLF (175 aa)) is the Exonuclease domain. The Mg(2+) site is built by Asp23, Glu25, His181, and Asp186. Residue His181 is the Proton donor/acceptor of the active site.

This sequence belongs to the RNase T family. In terms of assembly, homodimer. It depends on Mg(2+) as a cofactor.

Trims short 3' overhangs of a variety of RNA species, leaving a one or two nucleotide 3' overhang. Responsible for the end-turnover of tRNA: specifically removes the terminal AMP residue from uncharged tRNA (tRNA-C-C-A). Also appears to be involved in tRNA biosynthesis. The polypeptide is Ribonuclease T (Klebsiella pneumoniae subsp. pneumoniae (strain ATCC 700721 / MGH 78578)).